We begin with the raw amino-acid sequence, 82 residues long: Large ribosomal subunit protein bL31B (82 aa).

This sequence belongs to the bacterial ribosomal protein bL31 family. Type B subfamily. In terms of assembly, part of the 50S ribosomal subunit.

This chain is Large ribosomal subunit protein bL31B, found in Pectobacterium atrosepticum (strain SCRI 1043 / ATCC BAA-672) (Erwinia carotovora subsp. atroseptica).